The primary structure comprises 219 residues: Vesicle-associated membrane protein 712 (219 aa).

Topologically, residues 1–189 (MSILYALVAR…NNTVWWRNCK (189 aa)) are cytoplasmic. Positions 7–111 (LVARGTVVLA…AMNDEFSRVL (105 aa)) constitute a Longin domain. Residues 126 to 186 (TISRIKGEMN…RRFNNTVWWR (61 aa)) form the v-SNARE coiled-coil homology domain. The helical; Anchor for type IV membrane protein transmembrane segment at 190–210 (LTLLLILVLLVIIYIGVAFAC) threads the bilayer. Residues 211–219 (HGPTLPSCV) are Vesicular-facing.

Belongs to the synaptobrevin family. As to expression, expressed in flowers, leaves, stems and roots.

The protein resides in the vacuole membrane. Its subcellular location is the prevacuolar compartment membrane. Its function is as follows. Involved in the targeting and/or fusion of transport vesicles to their target membrane. This is Vesicle-associated membrane protein 712 from Arabidopsis thaliana (Mouse-ear cress).